The primary structure comprises 145 residues: Small ribosomal subunit protein eS19 (145 aa).

Position 23 is an N6-acetyllysine (Lys23). Arg67 is subject to Omega-N-methylarginine. N6-acetyllysine is present on residues Lys111 and Lys115. At Lys143 the chain carries N6-succinyllysine.

The protein belongs to the eukaryotic ribosomal protein eS19 family. Component of the small ribosomal subunit. Part of the small subunit (SSU) processome, composed of more than 70 proteins and the RNA chaperone small nucleolar RNA (snoRNA) U3. Interacts with RPS19BP1.

Its subcellular location is the cytoplasm. It localises to the nucleus. The protein resides in the nucleolus. Functionally, component of the small ribosomal subunit. The ribosome is a large ribonucleoprotein complex responsible for the synthesis of proteins in the cell. Required for pre-rRNA processing and maturation of 40S ribosomal subunits. Part of the small subunit (SSU) processome, first precursor of the small eukaryotic ribosomal subunit. During the assembly of the SSU processome in the nucleolus, many ribosome biogenesis factors, an RNA chaperone and ribosomal proteins associate with the nascent pre-rRNA and work in concert to generate RNA folding, modifications, rearrangements and cleavage as well as targeted degradation of pre-ribosomal RNA by the RNA exosome. The polypeptide is Small ribosomal subunit protein eS19 (Rps19) (Rattus norvegicus (Rat)).